The primary structure comprises 206 residues: Ras-related protein Rab7 (206 aa).

Residues 15-22 (GDSGVGKT), 63-67 (DTAGQ), and 125-128 (NKID) each bind GTP. S-geranylgeranyl cysteine attachment occurs at residues cysteine 204 and cysteine 206. At cysteine 206 the chain carries Cysteine methyl ester.

This sequence belongs to the small GTPase superfamily. Rab family.

It is found in the cell membrane. Protein transport. Probably involved in vesicular traffic. This is Ras-related protein Rab7 from Pisum sativum (Garden pea).